The sequence spans 292 residues: Diaminopimelate epimerase (292 aa).

Substrate-binding residues include Asn13, Gln46, and Asn66. The active-site Proton donor is the Cys75. Residues 76–77 (GN), Asn166, Asn199, and 217–218 (ER) each bind substrate. The Proton acceptor role is filled by Cys226. A substrate-binding site is contributed by 227–228 (GT).

Belongs to the diaminopimelate epimerase family. Homodimer.

Its subcellular location is the cytoplasm. It carries out the reaction (2S,6S)-2,6-diaminopimelate = meso-2,6-diaminopimelate. It functions in the pathway amino-acid biosynthesis; L-lysine biosynthesis via DAP pathway; DL-2,6-diaminopimelate from LL-2,6-diaminopimelate: step 1/1. Catalyzes the stereoinversion of LL-2,6-diaminopimelate (L,L-DAP) to meso-diaminopimelate (meso-DAP), a precursor of L-lysine and an essential component of the bacterial peptidoglycan. The protein is Diaminopimelate epimerase of Ralstonia nicotianae (strain ATCC BAA-1114 / GMI1000) (Ralstonia solanacearum).